The sequence spans 405 residues: Protein PAG1 (405 aa).

The N-terminal stretch at 1–50 is a signal peptide; sequence MVSLIILFRLTFAIANRVRTLMKVLVIVSFFVLTGSASADSGALSLSGAA. Residues asparagine 55, asparagine 104, asparagine 256, and asparagine 351 are each glycosylated (N-linked (GlcNAc...) asparagine). Alanine 391 carries the GPI-anchor amidated alanine lipid modification. Positions 392–405 are cleaved as a propeptide — removed in mature form; that stretch reads DSLRRTLALLFLLF.

The protein localises to the cell membrane. The protein is Protein PAG1 (PAG1) of Trypanosoma brucei brucei.